A 304-amino-acid chain; its full sequence is MPRQAASRLVVGEGEGPPGASGPAATMLRSLLLHSLRLCAQTASCLVLFPRFLGTAFMLWLLDFLCIRKHFLRRRHPDHPEPEVELNSEGEEMPPDDPPICVSDDNRLCTLASLKAVWHGQKLDFFKQAHEGGPAPNSEVVRPDGFQSQRILDYAQGTRPLVLNFGSCTUPPFMARMSAFQRLVTKYQRDVDFLIIYIEEAHPSDGWVTTDSPYVIPQHRSLEDRVSAARVLQQGAPGCALVLDTMANSSSSAYGAYFERLYVIQSGTIMYQGGRGPDGYQVSELRTWLERYDEQLHGTRPRRL.

Positions 1–22 (MPRQAASRLVVGEGEGPPGASG) are disordered. The Cytoplasmic portion of the chain corresponds to 1 to 42 (MPRQAASRLVVGEGEGPPGASGPAATMLRSLLLHSLRLCAQT). A helical; Signal-anchor for type II membrane protein transmembrane segment spans residues 43–62 (ASCLVLFPRFLGTAFMLWLL). Over 63–304 (DFLCIRKHFL…QLHGTRPRRL (242 aa)) the chain is Extracellular. U170 is a catalytic residue. A non-standard amino acid (selenocysteine) is located at residue U170.

Belongs to the iodothyronine deiodinase family. In terms of assembly, monomer. Homodimer. May undergo minor heretodimerization with DIO1 and DIO2. Neonatal skin, placenta, skeletal muscle and cerebral cortex.

Its subcellular location is the cell membrane. The protein localises to the endosome membrane. It catalyses the reaction 3,3',5'-triiodo-L-thyronine + iodide + A + H(+) = L-thyroxine + AH2. The catalysed reaction is 3,3'-diiodo-L-thyronine + iodide + A + H(+) = 3,3',5-triiodo-L-thyronine + AH2. It carries out the reaction 3-iodo-L-thyronine + iodide + A + H(+) = 3,5-diiodo-L-thyronine + AH2. The enzyme catalyses L-thyronine + iodide + A + H(+) = 3-iodo-L-thyronine + AH2. It catalyses the reaction 3',5'-diiodo-L-thyronine + iodide + A + H(+) = 3,3',5'-triiodo-L-thyronine + AH2. The catalysed reaction is 3'-iodo-L-thyronine + iodide + A + H(+) = 3,3'-diiodo-L-thyronine + AH2. It carries out the reaction 3,3',5'-triiodothyronamine + iodide + A + H(+) = 3,3',5,5'-tetraiodothyronamine + AH2. The enzyme catalyses 3',5'-diiodothyronamine + iodide + A + H(+) = 3,3',5'-triiodothyronamine + AH2. It catalyses the reaction 3,3'-diiodothyronamine + iodide + A + H(+) = 3,3',5-triiodothyronamine + AH2. The catalysed reaction is 3-iodothyronamine + iodide + A + H(+) = 3,5-diiodothyronamine + AH2. It carries out the reaction 3'-iodothyronamine + iodide + A + H(+) = 3,3'-diiodothyronamine + AH2. The enzyme catalyses thyronamine + iodide + A + H(+) = 3-iodothyronamine + AH2. Its function is as follows. Plays a crucial role in the metabolism of thyroid hormones (TH) and has specific roles in TH activation and inactivation by deiodination. Catalyzes the deiodination of L-thyroxine (T4) to 3,3',5'-triiodothyronine (rT3), 3,5-diiodothyronine (3,5-T2) to 3-monoiodothyronine (3-T1), rT3 to 3',5'-diiodothyronine (3',5'-T2) and 3,3'-diiodothyronine (3,3'-T2) to 3'-monoiodothyronine (3'-T1) via inner-ring deiodination (IRD). Catalyzes the deiodination of 3,5,3'-triiodothyronine (T3) to 3,3'-diiodothyronine (3,3'-T2) via IRD. Catalyzes the deiodination of 3-T1 to L-thyronine (T0) via outer-ring deiodination (ORD). Catalyzes the tyrosyl ring deiodinations of T4AM (3,3',5,5'-tetraiodothyronamine), rT3AM (3,3',5'-triiodothyronamine), T3AM (3,5,3'-triiodothyronamine), 3,5-T2AM (3,5-diiodothyronamine), 3,3'-T2AM (3,3'-diiodothyronamine) and 3-T1AM (3-iodothyronamine). The polypeptide is Thyroxine 5-deiodinase (Dio3) (Rattus norvegicus (Rat)).